A 749-amino-acid polypeptide reads, in one-letter code: Amyloid-beta A4 precursor protein-binding family A member 2 (749 aa).

Disordered stretches follow at residues 1–94 (MAHQ…PEEE) and 130–343 (DTDE…NNIP). Ser-11 carries the post-translational modification Phosphoserine. Residues 70–80 (GDSSSDYVNNT) show a composition bias toward polar residues. 2 stretches are compositionally biased toward acidic residues: residues 81 to 94 (SEEE…PEEE) and 131 to 142 (TDECQEAVEEWT). The STXBP1-binding stretch occupies residues 185–270 (HYCASKEGYQ…SAEACPPIKA (86 aa)). Residue Ser-208 is modified to Phosphoserine. The span at 218-227 (DLEDQEEDID) shows a compositional bias: acidic residues. Residues 237-247 (LSMTSITSASE) are compositionally biased toward polar residues. The span at 305-315 (RTPEERPKWPH) shows a compositional bias: basic and acidic residues. In terms of domain architecture, PID spans 366–555 (LIDGIIFAAN…IINTQEMYND (190 aa)). 2 consecutive PDZ domains span residues 568 to 653 (ELQL…NIVS) and 659 to 735 (TVLI…MPAA).

In terms of assembly, part of a multimeric complex containing STXBP1 and syntaxin-1. Binds to the cytoplasmic domain of amyloid-beta protein, and to the nuclear factor NF-kappa-B/p65 via its PDZ domain. Interacts with the N-terminal domain of NECAB3.

Functionally, putative function in synaptic vesicle exocytosis by binding to STXBP1, an essential component of the synaptic vesicle exocytotic machinery. May modulate processing of the amyloid-beta precursor protein (APP) and hence formation of APP-beta. This is Amyloid-beta A4 precursor protein-binding family A member 2 (APBA2) from Pongo abelii (Sumatran orangutan).